The following is an 84-amino-acid chain: Translation initiation factor IF-1, chloroplastic (84 aa).

The region spanning 1–72 (MKKQNLVEME…SKGRITYRLR (72 aa)) is the S1-like domain.

The protein belongs to the IF-1 family. Component of the 30S ribosomal translation pre-initiation complex which assembles on the 30S ribosome in the order IF-2 and IF-3, IF-1 and N-formylmethionyl-tRNA(fMet); mRNA recruitment can occur at any time during PIC assembly.

Its subcellular location is the plastid. It is found in the chloroplast. One of the essential components for the initiation of protein synthesis. Stabilizes the binding of IF-2 and IF-3 on the 30S subunit to which N-formylmethionyl-tRNA(fMet) subsequently binds. Helps modulate mRNA selection, yielding the 30S pre-initiation complex (PIC). Upon addition of the 50S ribosomal subunit IF-1, IF-2 and IF-3 are released leaving the mature 70S translation initiation complex. The polypeptide is Translation initiation factor IF-1, chloroplastic (Spirogyra maxima (Green alga)).